We begin with the raw amino-acid sequence, 304 residues long: Glycine--tRNA ligase alpha subunit (304 aa).

It belongs to the class-II aminoacyl-tRNA synthetase family. As to quaternary structure, tetramer of two alpha and two beta subunits.

Its subcellular location is the cytoplasm. It carries out the reaction tRNA(Gly) + glycine + ATP = glycyl-tRNA(Gly) + AMP + diphosphate. The polypeptide is Glycine--tRNA ligase alpha subunit (Pectobacterium carotovorum subsp. carotovorum (strain PC1)).